Reading from the N-terminus, the 202-residue chain is Small ribosomal subunit protein uS4 (202 aa).

Residues 94 to 157 (SRLDNLVYRM…KDLPIVAAGA (64 aa)) form the S4 RNA-binding domain.

The protein belongs to the universal ribosomal protein uS4 family. Part of the 30S ribosomal subunit. Contacts protein S5. The interaction surface between S4 and S5 is involved in control of translational fidelity.

One of the primary rRNA binding proteins, it binds directly to 16S rRNA where it nucleates assembly of the body of the 30S subunit. Functionally, with S5 and S12 plays an important role in translational accuracy. In Malacoplasma penetrans (strain HF-2) (Mycoplasma penetrans), this protein is Small ribosomal subunit protein uS4.